An 87-amino-acid chain; its full sequence is Sec-independent protein translocase protein TatA (87 aa).

A helical transmembrane segment spans residues 1–21 (MGGISIWQLLIIALIIVLLFG). The disordered stretch occupies residues 54–87 (NTEADADFEQKTLSKEEQQSEDPVQKSQKDKEQV).

It belongs to the TatA/E family. As to quaternary structure, the Tat system comprises two distinct complexes: a TatABC complex, containing multiple copies of TatA, TatB and TatC subunits, and a separate TatA complex, containing only TatA subunits. Substrates initially bind to the TatABC complex, which probably triggers association of the separate TatA complex to form the active translocon.

It is found in the cell inner membrane. Part of the twin-arginine translocation (Tat) system that transports large folded proteins containing a characteristic twin-arginine motif in their signal peptide across membranes. TatA could form the protein-conducting channel of the Tat system. The chain is Sec-independent protein translocase protein TatA from Photobacterium profundum (strain SS9).